The following is a 248-amino-acid chain: Triosephosphate isomerase (248 aa).

9–11 serves as a coordination point for substrate; that stretch reads NWK. His94 serves as the catalytic Electrophile. Glu166 serves as the catalytic Proton acceptor. Residues Gly172, Ser212, and 233 to 234 contribute to the substrate site; that span reads GG.

Belongs to the triosephosphate isomerase family. Homodimer.

The protein localises to the cytoplasm. It carries out the reaction D-glyceraldehyde 3-phosphate = dihydroxyacetone phosphate. It participates in carbohydrate biosynthesis; gluconeogenesis. Its pathway is carbohydrate degradation; glycolysis; D-glyceraldehyde 3-phosphate from glycerone phosphate: step 1/1. In terms of biological role, involved in the gluconeogenesis. Catalyzes stereospecifically the conversion of dihydroxyacetone phosphate (DHAP) to D-glyceraldehyde-3-phosphate (G3P). In Clostridium acetobutylicum (strain ATCC 824 / DSM 792 / JCM 1419 / IAM 19013 / LMG 5710 / NBRC 13948 / NRRL B-527 / VKM B-1787 / 2291 / W), this protein is Triosephosphate isomerase.